A 408-amino-acid chain; its full sequence is Exodeoxyribonuclease 7 large subunit (408 aa).

This sequence belongs to the XseA family. As to quaternary structure, heterooligomer composed of large and small subunits.

Its subcellular location is the cytoplasm. The catalysed reaction is Exonucleolytic cleavage in either 5'- to 3'- or 3'- to 5'-direction to yield nucleoside 5'-phosphates.. Its function is as follows. Bidirectionally degrades single-stranded DNA into large acid-insoluble oligonucleotides, which are then degraded further into small acid-soluble oligonucleotides. The protein is Exodeoxyribonuclease 7 large subunit of Alkaliphilus oremlandii (strain OhILAs) (Clostridium oremlandii (strain OhILAs)).